Consider the following 426-residue polypeptide: Serine--tRNA ligase (426 aa).

An L-serine-binding site is contributed by 231–233; that stretch reads TAE. 262-264 is an ATP binding site; it reads RSE. Glutamate 285 contributes to the L-serine binding site. 349–352 provides a ligand contact to ATP; that stretch reads EISS. Serine 385 is an L-serine binding site.

The protein belongs to the class-II aminoacyl-tRNA synthetase family. Type-1 seryl-tRNA synthetase subfamily. In terms of assembly, homodimer. The tRNA molecule binds across the dimer.

It is found in the cytoplasm. The catalysed reaction is tRNA(Ser) + L-serine + ATP = L-seryl-tRNA(Ser) + AMP + diphosphate + H(+). It catalyses the reaction tRNA(Sec) + L-serine + ATP = L-seryl-tRNA(Sec) + AMP + diphosphate + H(+). Its pathway is aminoacyl-tRNA biosynthesis; selenocysteinyl-tRNA(Sec) biosynthesis; L-seryl-tRNA(Sec) from L-serine and tRNA(Sec): step 1/1. In terms of biological role, catalyzes the attachment of serine to tRNA(Ser). Is also able to aminoacylate tRNA(Sec) with serine, to form the misacylated tRNA L-seryl-tRNA(Sec), which will be further converted into selenocysteinyl-tRNA(Sec). In Lysinibacillus sphaericus (strain C3-41), this protein is Serine--tRNA ligase.